We begin with the raw amino-acid sequence, 341 residues long: tRNA N6-adenosine threonylcarbamoyltransferase (341 aa).

Fe cation contacts are provided by His115 and His119. Residues 137–141 (AVSGG), Asp170, Gly183, Asp187, and Asn276 each bind substrate. Position 306 (Asp306) interacts with Fe cation.

Belongs to the KAE1 / TsaD family. It depends on Fe(2+) as a cofactor.

It localises to the cytoplasm. The enzyme catalyses L-threonylcarbamoyladenylate + adenosine(37) in tRNA = N(6)-L-threonylcarbamoyladenosine(37) in tRNA + AMP + H(+). Functionally, required for the formation of a threonylcarbamoyl group on adenosine at position 37 (t(6)A37) in tRNAs that read codons beginning with adenine. Is involved in the transfer of the threonylcarbamoyl moiety of threonylcarbamoyl-AMP (TC-AMP) to the N6 group of A37, together with TsaE and TsaB. TsaD likely plays a direct catalytic role in this reaction. This chain is tRNA N6-adenosine threonylcarbamoyltransferase, found in Lacticaseibacillus casei (strain BL23) (Lactobacillus casei).